The primary structure comprises 492 residues: N-succinylglutamate 5-semialdehyde dehydrogenase (492 aa).

220-225 (GSASTG) contributes to the NAD(+) binding site. Residues glutamate 243 and cysteine 277 contribute to the active site.

The protein belongs to the aldehyde dehydrogenase family. AstD subfamily.

The catalysed reaction is N-succinyl-L-glutamate 5-semialdehyde + NAD(+) + H2O = N-succinyl-L-glutamate + NADH + 2 H(+). It functions in the pathway amino-acid degradation; L-arginine degradation via AST pathway; L-glutamate and succinate from L-arginine: step 4/5. Catalyzes the NAD-dependent reduction of succinylglutamate semialdehyde into succinylglutamate. The sequence is that of N-succinylglutamate 5-semialdehyde dehydrogenase from Salmonella schwarzengrund (strain CVM19633).